A 205-amino-acid polypeptide reads, in one-letter code: LexA repressor (205 aa).

A DNA-binding region (H-T-H motif) is located at residues 28 to 48; that stretch reads RAEIARRLGFKSANAAEEHLK. Active-site for autocatalytic cleavage activity residues include Ser122 and Lys159.

The protein belongs to the peptidase S24 family. As to quaternary structure, homodimer.

The catalysed reaction is Hydrolysis of Ala-|-Gly bond in repressor LexA.. In terms of biological role, represses a number of genes involved in the response to DNA damage (SOS response), including recA and lexA. In the presence of single-stranded DNA, RecA interacts with LexA causing an autocatalytic cleavage which disrupts the DNA-binding part of LexA, leading to derepression of the SOS regulon and eventually DNA repair. This Shewanella loihica (strain ATCC BAA-1088 / PV-4) protein is LexA repressor.